The primary structure comprises 52 residues: UPF0391 membrane protein Tgr7_2500 (52 aa).

2 helical membrane-spanning segments follow: residues 4 to 24 (WALI…SGVA) and 29 to 49 (WIAQ…LLGG).

This sequence belongs to the UPF0391 family.

It localises to the cell membrane. The polypeptide is UPF0391 membrane protein Tgr7_2500 (Thioalkalivibrio sulfidiphilus (strain HL-EbGR7)).